A 258-amino-acid polypeptide reads, in one-letter code: MRVWTVLLGAVLLLAACQADVQDVETKVKAKWEETVEVFREYVNRLSLATDDITEQITSSQMGKEMDMLIKDXVAELHAYRKDVEERLGPQAVVMRERLHTDVTVLGERLRVDMEEAKTRVQQYLGEARQVAGQNLEDVRSRVGTYLRKLRKRLAKDTEELRRKLEAYSKEATQHLETVREDLEPLREKGQQRLETLQQALRDQGQRLREQLEVRAQEMRGSLDRAATQLQEWLEPFLEDIRTQMQGLLDKLQXKEQQ.

The signal sequence occupies residues 1–19; sequence MRVWTVLLGAVLLLAACQA. Tandem repeats lie at residues 112–133, 134–155, and 156–173. Residues 112–173 form a 3 X 22 AA approximate tandem repeats region; that stretch reads VDMEEAKTRV…KLEAYSKEAT (62 aa).

Belongs to the apolipoprotein A1/A4/E family. In terms of assembly, homotetramer.

It localises to the secreted. The protein localises to the extracellular space. Its subcellular location is the extracellular matrix. Functionally, APOE is an apolipoprotein, a protein associating with lipid particles, that mainly functions in lipoprotein-mediated lipid transport between organs via the plasma and interstitial fluids. APOE is a core component of plasma lipoproteins and is involved in their production, conversion and clearance. Apolipoproteins are amphipathic molecules that interact both with lipids of the lipoprotein particle core and the aqueous environment of the plasma. This is Apolipoprotein E (APOE) from Alligator mississippiensis (American alligator).